The sequence spans 489 residues: Squalene monooxygenase (489 aa).

Residues 10–30 (VTYDALIVGAGVIGPCVATAL) form a helical membrane-spanning segment. FAD-binding positions include 21-22 (VI), 41-42 (ER), arginine 49, arginine 151, valine 167, aspartate 328, and methionine 341. 2 helical membrane-spanning segments follow: residues 426-446 (FLAG…AVAF) and 464-484 (ALLE…PFLV).

The protein belongs to the squalene monooxygenase family. The cofactor is FAD.

Its subcellular location is the microsome membrane. It is found in the endoplasmic reticulum membrane. It catalyses the reaction squalene + reduced [NADPH--hemoprotein reductase] + O2 = (S)-2,3-epoxysqualene + oxidized [NADPH--hemoprotein reductase] + H2O + H(+). Its pathway is terpene metabolism; lanosterol biosynthesis; lanosterol from farnesyl diphosphate: step 2/3. In terms of biological role, catalyzes the stereospecific oxidation of squalene to (S)-2,3-epoxysqualene, and is considered to be a rate-limiting enzyme in steroid biosynthesis. The sequence is that of Squalene monooxygenase (ERG1) from Candida glabrata (strain ATCC 2001 / BCRC 20586 / JCM 3761 / NBRC 0622 / NRRL Y-65 / CBS 138) (Yeast).